We begin with the raw amino-acid sequence, 255 residues long: Hydroxyacylglutathione hydrolase (255 aa).

Zn(2+)-binding residues include histidine 56, histidine 58, aspartate 60, histidine 61, histidine 114, aspartate 133, and histidine 171.

It belongs to the metallo-beta-lactamase superfamily. Glyoxalase II family. In terms of assembly, monomer. Zn(2+) serves as cofactor.

It carries out the reaction an S-(2-hydroxyacyl)glutathione + H2O = a 2-hydroxy carboxylate + glutathione + H(+). It participates in secondary metabolite metabolism; methylglyoxal degradation; (R)-lactate from methylglyoxal: step 2/2. In terms of biological role, thiolesterase that catalyzes the hydrolysis of S-D-lactoyl-glutathione to form glutathione and D-lactic acid. This chain is Hydroxyacylglutathione hydrolase, found in Bradyrhizobium diazoefficiens (strain JCM 10833 / BCRC 13528 / IAM 13628 / NBRC 14792 / USDA 110).